A 1479-amino-acid polypeptide reads, in one-letter code: MGPGRPAPAPWPRHLLRCVLLLGCLHLGRPGAPGDAALPEPNVFLIFSHGLQGCLEAQGGQVRVTPACNTSLPAQRWKWVSRNRLFNLGTMQCLGTGWPGTNTTASLGMYECDREALNLRWHCRTLGDQLSLLLGARTSNISKPGTLERGDQTRSGQWRIYGSEEDLCALPYHEVYTIQGNSHGKPCTIPFKYDNQWFHGCTSTGREDGHLWCATTQDYGKDERWGFCPIKSNDCETFWDKDQLTDSCYQFNFQSTLSWREAWASCEQQGADLLSITEIHEQTYINGLLTGYSSTLWIGLNDLDTSGGWQWSDNSPLKYLNWESDQPDNPSEENCGVIRTESSGGWQNRDCSIALPYVCKKKPNATAEPTPPDRWANVKVECEPSWQPFQGHCYRLQAEKRSWQESKKACLRGGGDLVSIHSMAELEFITKQIKQEVEELWIGLNDLKLQMNFEWSDGSLVSFTHWHPFEPNNFRDSLEDCVTIWGPEGRWNDSPCNQSLPSICKKAGQLSQGAAEEDHGCRKGWTWHSPSCYWLGEDQVTYSEARRLCTDHGSQLVTITNRFEQAFVSSLIYNWEGEYFWTALQDLNSTGSFFWLSGDEVMYTHWNRDQPGYSRGGCVALATGSAMGLWEVKNCTSFRARYICRQSLGTPVTPELPGPDPTPSLTGSCPQGWASDTKLRYCYKVFSSERLQDKKSWVQAQGACQELGAQLLSLASYEEEHFVANMLNKIFGESEPEIHEQHWFWIGLNRRDPRGGQSWRWSDGVGFSYHNFDRSRHDDDDIRGCAVLDLASLQWVAMQCDTQLDWICKIPRGTDVREPDDSPQGRREWLRFQEAEYKFFEHHSTWAQAQRICTWFQAELTSVHSQAELDFLSHNLQKFSRAQEQHWWIGLHTSESDGRFRWTDGSIINFISWAPGKPRPVGKDKKCVYMTASREDWGDQRCLTALPYICKRSNVTKETQPPDLPTTALGGCPSDWIQFLNKCFQVQGQEPQSRVKWSEAQFSCEQQEAQLVTITNPLEQAFITASLPNVTFDLWIGLHASQRDFQWVEQEPLMYANWAPGEPSGPSPAPSGNKPTSCAVVLHSPSAHFTGRWDDRSCTEETHGFICQKGTDPSLSPSPAALPPAPGTELSYLNGTFRLLQKPLRWHDALLLCESRNASLAYVPDPYTQAFLTQAARGLRTPLWIGLAGEEGSRRYSWVSEEPLNYVGWQDGEPQQPGGCTYVDVDGAWRTTSCDTKLQGAVCGVSSGPPPPRRISYHGSCPQGLADSAWIPFREHCYSFHMELLLGHKEARQRCQRAGGAVLSILDEMENVFVWEHLQSYEGQSRGAWLGMNFNPKGGTLVWQDNTAVNYSNWGPPGLGPSMLSHNSCYWIQSNSGLWRPGACTNITMGVVCKLPRAEQSSFSPSALPENPAALVVVLMAVLLLLALLTAALILYRRRQSIERGAFEGARYSRSSSSPTEATEKNILVSDMEMNEQQE.

Residues 1 to 30 (MGPGRPAPAPWPRHLLRCVLLLGCLHLGRP) form the signal peptide. Residues 31–1414 (GAPGDAALPE…PSALPENPAA (1384 aa)) are Extracellular-facing. Positions 41-167 (PNVFLIFSHG…WRIYGSEEDL (127 aa)) constitute a Ricin B-type lectin domain. Cys54 and Cys68 are joined by a disulfide. Asn69 carries N-linked (GlcNAc...) (complex) asparagine glycosylation. Cysteines 93 and 112 form a disulfide. The N-linked (GlcNAc...) asparagine glycan is linked to Asn140. Residues 182–230 (SHGKPCTIPFKYDNQWFHGCTSTGREDGHLWCATTQDYGKDERWGFCPI) form the Fibronectin type-II domain. 4 disulfide bridges follow: Cys187-Cys213, Cys201-Cys228, Cys266-Cys359, and Cys335-Cys351. The C-type lectin 1 domain occupies 244-360 (LTDSCYQFNF…CSIALPYVCK (117 aa)). Asn364 carries an N-linked (GlcNAc...) asparagine glycan. C-type lectin domains are found at residues 389-505 (FQGH…SICK), 528-644 (HSPS…RYIC), 678-809 (KLRY…WICK), and 832-951 (FQEA…YICK). Disulfide bonds link Cys410–Cys504 and Cys481–Cys496. Asn588 carries N-linked (GlcNAc...) asparagine glycosylation. Cystine bridges form between Cys618–Cys635, Cys704–Cys808, Cys785–Cys800, Cys853–Cys950, and Cys927–Cys942. 2 N-linked (GlcNAc...) asparagine glycosylation sites follow: Asn954 and Asn1029. 3 consecutive C-type lectin domains span residues 979–1107 (FLNK…GFIC), 1132–1243 (YLNG…GAVC), and 1273–1393 (FREH…GVVC). Cys1078 and Cys1098 are disulfide-bonded. Lys1142 participates in a covalent cross-link: Glycyl lysine isopeptide (Lys-Gly) (interchain with G-Cter in SUMO1). A disulfide bridge links Cys1220 with Cys1234. N-linked (GlcNAc...) asparagine glycosylation is present at Asn1350. Cysteines 1369 and 1384 form a disulfide. The helical transmembrane segment at 1415 to 1435 (LVVVLMAVLLLLALLTAALIL) threads the bilayer. Residues 1436–1479 (YRRRQSIERGAFEGARYSRSSSSPTEATEKNILVSDMEMNEQQE) are Cytoplasmic-facing. The disordered stretch occupies residues 1450-1479 (ARYSRSSSSPTEATEKNILVSDMEMNEQQE).

In terms of assembly, interacts with C-terminal region of type I collagen/COL1A1. Interacts directly with PLAUR/UPAR and PLAU/pro-UPA to form a tri-molecular complex. Interacts with collagen V. In terms of processing, N-glycosylated. Ubiquitous with low expression in brain, placenta, lung, kidney, pancreas, spleen, thymus and colon. Expressed in endothelial cells, fibroblasts and macrophages. Highly expressed in fetal lung and kidney.

It is found in the membrane. In terms of biological role, may play a role as endocytotic lectin receptor displaying calcium-dependent lectin activity. Internalizes glycosylated ligands from the extracellular space for release in an endosomal compartment via clathrin-mediated endocytosis. May be involved in plasminogen activation system controlling the extracellular level of PLAUR/PLAU, and thus may regulate protease activity at the cell surface. May contribute to cellular uptake, remodeling and degradation of extracellular collagen matrices. May play a role during cancer progression as well as in other chronic tissue destructive diseases acting on collagen turnover. May participate in remodeling of extracellular matrix cooperating with the matrix metalloproteinases (MMPs). The protein is C-type mannose receptor 2 (MRC2) of Homo sapiens (Human).